We begin with the raw amino-acid sequence, 202 residues long: MKKIGVFGGTFDPIHIGHIYIAYEAYKILELDEVIFMPAGNPPHKKWKDITDEIIRYEMVKKAIEPYSFFSINNYEIEKKGLSFTYETLRYLHESFKEVELYFITGADCLINLNSWKNINEIFKFSNLVVFNRPGFDKNDLLKRKEEFDREYCTNIVYLDLLNIEISSTLIRERVHDSLEVKFFLPPGVVDIIDKYNLYRRE.

This sequence belongs to the NadD family.

It carries out the reaction nicotinate beta-D-ribonucleotide + ATP + H(+) = deamido-NAD(+) + diphosphate. Its pathway is cofactor biosynthesis; NAD(+) biosynthesis; deamido-NAD(+) from nicotinate D-ribonucleotide: step 1/1. Catalyzes the reversible adenylation of nicotinate mononucleotide (NaMN) to nicotinic acid adenine dinucleotide (NaAD). The polypeptide is Probable nicotinate-nucleotide adenylyltransferase (Clostridium perfringens (strain ATCC 13124 / DSM 756 / JCM 1290 / NCIMB 6125 / NCTC 8237 / Type A)).